The primary structure comprises 395 residues: Argininosuccinate synthase (395 aa).

8 to 16 (AYSGGLDTS) contributes to the ATP binding site. Residues Y86 and S91 each coordinate L-citrulline. ATP is bound at residue G116. Residues T118, N122, and D123 each coordinate L-aspartate. N122 is a binding site for L-citrulline. L-citrulline-binding residues include R126, S172, S181, E257, and Y269.

It belongs to the argininosuccinate synthase family. Type 1 subfamily. In terms of assembly, homotetramer.

It localises to the cytoplasm. It carries out the reaction L-citrulline + L-aspartate + ATP = 2-(N(omega)-L-arginino)succinate + AMP + diphosphate + H(+). The protein operates within amino-acid biosynthesis; L-arginine biosynthesis; L-arginine from L-ornithine and carbamoyl phosphate: step 2/3. The polypeptide is Argininosuccinate synthase (Methanosarcina barkeri (strain Fusaro / DSM 804)).